The primary structure comprises 630 residues: MDFPSRFDVIVIGGGHAGTEAALASARMGVKTLLLTHNVETLGHMSCNPAIGGIGKSHLVKEIDALGGAMALATDKSGIQFRVLNNRKGPAVRATRAQADRAIYKAVVREILENQPNLWIFQQNCDDLIVEQDQVKGVVTQMGLRFFAESVVLTTGTFLGGLIHIGLQNHSGGRAGDPPSIALAHRMRELPLRVGRLKTGTPPRIDGRSVDFSVMTEQPGDTPIPVMSFMGNAEMHPRQVSCWITHTNARTHEIIASNLDRSPMYSGVIEGVGPRYCPSIEDKIHRFADKESHQVFIEPEGLNTHELYPNGISTSLPFDVQLELVRSIRGMENAHIVRPGYAIEYDYFDPRDLKYSLETKVIGGLFFAGQINGTTGYEEAGAQGLLAGTNAALRAQGRDSWCPRRDEAYIGVLVDDLITLGTQEPYRMFTSRAEYRLILREDNADLRLTEKGRELGLIDDQRWAAFCAKRDGIEREEQRLKSTWVRPNTEQGQAIVDKFGTPLSHEYSLLNLLARPEIDYAGLIEATGGEAIDPQVAEQVEIRTKYAGYIDRQQDEIARLRASEDTRLPVDIDYTTISGLSKEIQGKLSQTRPQTLGQASRIPGVTPAAISLLLIHLKKRGAGRELEQSA.

13–18 provides a ligand contact to FAD; that stretch reads GGGHAG. 273-287 is a binding site for NAD(+); sequence GPRYCPSIEDKIHRF.

Belongs to the MnmG family. Homodimer. Heterotetramer of two MnmE and two MnmG subunits. The cofactor is FAD.

It is found in the cytoplasm. Its function is as follows. NAD-binding protein involved in the addition of a carboxymethylaminomethyl (cmnm) group at the wobble position (U34) of certain tRNAs, forming tRNA-cmnm(5)s(2)U34. This is tRNA uridine 5-carboxymethylaminomethyl modification enzyme MnmG from Pseudomonas putida (Arthrobacter siderocapsulatus).